Consider the following 78-residue polypeptide: Exodeoxyribonuclease 7 small subunit (78 aa).

The protein belongs to the XseB family. As to quaternary structure, heterooligomer composed of large and small subunits.

Its subcellular location is the cytoplasm. The enzyme catalyses Exonucleolytic cleavage in either 5'- to 3'- or 3'- to 5'-direction to yield nucleoside 5'-phosphates.. In terms of biological role, bidirectionally degrades single-stranded DNA into large acid-insoluble oligonucleotides, which are then degraded further into small acid-soluble oligonucleotides. The sequence is that of Exodeoxyribonuclease 7 small subunit from Synechococcus sp. (strain JA-2-3B'a(2-13)) (Cyanobacteria bacterium Yellowstone B-Prime).